The primary structure comprises 475 residues: Gamma-aminobutyric acid receptor subunit gamma-2 (475 aa).

Residues 1–39 (MSSPNIWSTGSSVYSTPVFSQKMTVWILLLLSLYPGFTS) form the signal peptide. Over 40 to 275 (QKSDDDYEDY…FDLSRRMGYF (236 aa)) the chain is Extracellular. N-linked (GlcNAc...) asparagine glycans are attached at residues Asn52 and Asn129. An intrachain disulfide couples Cys190 to Cys204. Asn247 is a glycosylation site (N-linked (GlcNAc...) asparagine). The helical transmembrane segment at 276-296 (TIQTYIPCTLIVVLSWVSFWI) threads the bilayer. The Cytoplasmic segment spans residues 297–302 (NKDAVP). A helical membrane pass occupies residues 303–322 (ARTSLGITTVLTMTTLSTIA). The Extracellular segment spans residues 323 to 334 (RKSLPKVSYVTA). The helical transmembrane segment at 335-359 (MDLFVSVCFIFVFSALVEYGTLHYF) threads the bilayer. The Cytoplasmic segment spans residues 360-451 (VSNRKPSKDK…IHIRIAKMDS (92 aa)). Residues 433–450 (RTGAWRHGRIHIRIAKMD) are interaction with GABARAP. Residues 452-472 (YARIFFPTAFCLFNLVYWVSY) form a helical membrane-spanning segment. The Extracellular segment spans residues 473-475 (LYL).

This sequence belongs to the ligand-gated ion channel (TC 1.A.9) family. Gamma-aminobutyric acid receptor (TC 1.A.9.5) subfamily. GABRG2 sub-subfamily. Heteropentamer, formed by a combination of alpha (GABRA1-6), beta (GABRB1-3), gamma (GABRG1-3), delta (GABRD), epsilon (GABRE), rho (GABRR1-3), pi (GABRP) and theta (GABRQ) chains, each subunit exhibiting distinct physiological and pharmacological properties. Interacts with GABARAP. Interacts with KIF21B. Identified in a complex of 720 kDa composed of LHFPL4, NLGN2, GABRA1, GABRB2, GABRG2 and GABRB3. Interacts with LHFPL4. Interacts with SHISA7; interaction leads to the regulation of GABA(A) receptor trafficking, channel deactivation kinetics and pharmacology. Post-translationally, palmitoylated by ZDHHC3/GODZ; required for the accumulation of GABA(A) receptors at the postsynaptic membrane of inhibitory GABAergic synapses.

It is found in the postsynaptic cell membrane. The protein localises to the cell membrane. The protein resides in the cell projection. It localises to the dendrite. Its subcellular location is the cytoplasmic vesicle membrane. The catalysed reaction is chloride(in) = chloride(out). With respect to regulation, allosterically activated by benzodiazepines. Activated by pentobarbital. Potentiated by etomidate, propofol, pregnanolone. Inhibited by the antagonist bicuculline. Inhibited by zinc ions. Potentiated by histamine. Its function is as follows. Gamma subunit of the heteropentameric ligand-gated chloride channel gated by gamma-aminobutyric acid (GABA), a major inhibitory neurotransmitter in the brain. GABA-gated chloride channels, also named GABA(A) receptors (GABAAR), consist of five subunits arranged around a central pore and contain GABA active binding site(s) located at the alpha and beta subunit interface(s). When activated by GABA, GABAARs selectively allow the flow of chloride anions across the cell membrane down their electrochemical gradient. Gamma-2/GABRG2-containing GABAARs are found at both synaptic and extrasynaptic sites. Chloride influx into the postsynaptic neuron following GABAAR opening decreases the neuron ability to generate a new action potential, thereby reducing nerve transmission. GABAARs containing alpha-1 and beta-2 or -3 subunits exhibit synaptogenic activity; the gamma-2 subunit being necessary but not sufficient to induce rapid synaptic contacts formation. Extrasynaptic gamma-2-containing receptors contribute to the tonic GABAergic inhibition. GABAARs function also as histamine receptor where histamine binds at the interface of two neighboring beta subunits and potentiates GABA response in a gamma-2 subunit-controlled manner. This is Gamma-aminobutyric acid receptor subunit gamma-2 from Homo sapiens (Human).